A 206-amino-acid polypeptide reads, in one-letter code: Protein-methionine-sulfoxide reductase heme-binding subunit MsrQ (206 aa).

Helical transmembrane passes span 8 to 28 (IVWL…WLVW), 82 to 102 (LWCF…ELGI), 116 to 136 (PYLT…LTST), and 153 to 173 (FVYL…KILS).

Belongs to the MsrQ family. As to quaternary structure, heterodimer of a catalytic subunit (MsrP) and a heme-binding subunit (MsrQ). It depends on FMN as a cofactor. Heme b is required as a cofactor.

Its subcellular location is the cell inner membrane. Part of the MsrPQ system that repairs oxidized periplasmic proteins containing methionine sulfoxide residues (Met-O), using respiratory chain electrons. Thus protects these proteins from oxidative-stress damage caused by reactive species of oxygen and chlorine generated by the host defense mechanisms. MsrPQ is essential for the maintenance of envelope integrity under bleach stress, rescuing a wide series of structurally unrelated periplasmic proteins from methionine oxidation. MsrQ provides electrons for reduction to the reductase catalytic subunit MsrP, using the quinone pool of the respiratory chain. This chain is Protein-methionine-sulfoxide reductase heme-binding subunit MsrQ, found in Citrobacter koseri (strain ATCC BAA-895 / CDC 4225-83 / SGSC4696).